A 400-amino-acid chain; its full sequence is Lipid-A-disaccharide synthase (400 aa).

Belongs to the LpxB family.

It carries out the reaction a lipid X + a UDP-2-N,3-O-bis[(3R)-3-hydroxyacyl]-alpha-D-glucosamine = a lipid A disaccharide + UDP + H(+). It participates in bacterial outer membrane biogenesis; LPS lipid A biosynthesis. Condensation of UDP-2,3-diacylglucosamine and 2,3-diacylglucosamine-1-phosphate to form lipid A disaccharide, a precursor of lipid A, a phosphorylated glycolipid that anchors the lipopolysaccharide to the outer membrane of the cell. This chain is Lipid-A-disaccharide synthase, found in Acidobacterium capsulatum (strain ATCC 51196 / DSM 11244 / BCRC 80197 / JCM 7670 / NBRC 15755 / NCIMB 13165 / 161).